Consider the following 310-residue polypeptide: Isoflavone reductase homolog A622-like (310 aa).

NADP(+) is bound by residues 13 to 19 (GGTGYIG), arginine 38, and lysine 47. Lysine 135 acts as the Proton acceptor in catalysis. Arginine 139 contacts NADP(+).

Belongs to the NmrA-type oxidoreductase family. Isoflavone reductase subfamily. In terms of assembly, monomer. Expressed in roots.

It localises to the cytoplasm. It functions in the pathway alkaloid biosynthesis; nicotine biosynthesis. In terms of biological role, involved in the biosynthesis of pyridine alkaloid natural products, leading mainly to the production of anabasine, anatabine, nicotine and nornicotine, effective deterrents against herbivores with antiparasitic and pesticide properties (neurotoxins); nornicotine serves as the precursor in the synthesis of the carcinogen compound N'-nitrosonornicotine (NNN). Reductase that may be involved in a late step of tobacco alkaloid biosynthesis. Maybe involved in either the formation of a nicotinic acid-derived precursor or the final condensation reaction of tobacco alkaloids. The sequence is that of Isoflavone reductase homolog A622-like from Nicotiana tabacum (Common tobacco).